Here is a 316-residue protein sequence, read N- to C-terminus: Acetaldehyde dehydrogenase 1 (316 aa).

12-15 provides a ligand contact to NAD(+); the sequence is SGNI. Cys132 functions as the Acyl-thioester intermediate in the catalytic mechanism. Residues 163 to 171 and Asn291 each bind NAD(+); that span reads SAGPGTRAN.

The protein belongs to the acetaldehyde dehydrogenase family.

It catalyses the reaction acetaldehyde + NAD(+) + CoA = acetyl-CoA + NADH + H(+). This Pseudomonas putida (strain ATCC 700007 / DSM 6899 / JCM 31910 / BCRC 17059 / LMG 24140 / F1) protein is Acetaldehyde dehydrogenase 1.